Reading from the N-terminus, the 949-residue chain is Protein translocase subunit SecA (949 aa).

Residues glutamine 87, glycine 105–threonine 109, and aspartate 524 contribute to the ATP site. Disordered regions lie at residues proline 852 to glycine 876 and leucine 896 to lysine 939. The Zn(2+) site is built by cysteine 933, cysteine 935, cysteine 944, and histidine 945.

This sequence belongs to the SecA family. In terms of assembly, monomer and homodimer. Part of the essential Sec protein translocation apparatus which comprises SecA, SecYEG and auxiliary proteins SecDF-YajC and YidC. The cofactor is Zn(2+).

The protein resides in the cell inner membrane. Its subcellular location is the cytoplasm. The catalysed reaction is ATP + H2O + cellular proteinSide 1 = ADP + phosphate + cellular proteinSide 2.. Part of the Sec protein translocase complex. Interacts with the SecYEG preprotein conducting channel. Has a central role in coupling the hydrolysis of ATP to the transfer of proteins into and across the cell membrane, serving both as a receptor for the preprotein-SecB complex and as an ATP-driven molecular motor driving the stepwise translocation of polypeptide chains across the membrane. In Methylocella silvestris (strain DSM 15510 / CIP 108128 / LMG 27833 / NCIMB 13906 / BL2), this protein is Protein translocase subunit SecA.